The primary structure comprises 350 residues: Ferrochelatase (350 aa).

2 residues coordinate Fe cation: His220 and Glu301.

Belongs to the ferrochelatase family.

It is found in the cytoplasm. It catalyses the reaction heme b + 2 H(+) = protoporphyrin IX + Fe(2+). It participates in porphyrin-containing compound metabolism; protoheme biosynthesis; protoheme from protoporphyrin-IX: step 1/1. In terms of biological role, catalyzes the ferrous insertion into protoporphyrin IX. This Brucella anthropi (strain ATCC 49188 / DSM 6882 / CCUG 24695 / JCM 21032 / LMG 3331 / NBRC 15819 / NCTC 12168 / Alc 37) (Ochrobactrum anthropi) protein is Ferrochelatase.